A 704-amino-acid chain; its full sequence is Ion-translocating oxidoreductase complex subunit C (704 aa).

2 consecutive 4Fe-4S ferredoxin-type domains span residues Met-368 to Tyr-397 and Lys-407 to Phe-436. Cys-377, Cys-380, Cys-383, Cys-387, Cys-416, Cys-419, Cys-422, and Cys-426 together coordinate [4Fe-4S] cluster. Residues Gln-534–Ala-682 are disordered.

The protein belongs to the 4Fe4S bacterial-type ferredoxin family. RnfC subfamily. In terms of assembly, the complex is composed of six subunits: RsxA, RsxB, RsxC, RsxD, RsxE and RsxG. Requires [4Fe-4S] cluster as cofactor.

It is found in the cell inner membrane. In terms of biological role, part of a membrane-bound complex that couples electron transfer with translocation of ions across the membrane. Required to maintain the reduced state of SoxR. This chain is Ion-translocating oxidoreductase complex subunit C, found in Salmonella enteritidis PT4 (strain P125109).